We begin with the raw amino-acid sequence, 309 residues long: Homoserine kinase (309 aa).

91-101 (PIGSGLGSSAC) is a binding site for ATP.

The protein belongs to the GHMP kinase family. Homoserine kinase subfamily.

The protein localises to the cytoplasm. It carries out the reaction L-homoserine + ATP = O-phospho-L-homoserine + ADP + H(+). It functions in the pathway amino-acid biosynthesis; L-threonine biosynthesis; L-threonine from L-aspartate: step 4/5. In terms of biological role, catalyzes the ATP-dependent phosphorylation of L-homoserine to L-homoserine phosphate. The protein is Homoserine kinase of Buchnera aphidicola subsp. Schizaphis graminum (strain Sg).